The chain runs to 190 residues: Putative manganese efflux pump MntP (190 aa).

Helical transmembrane passes span 3 to 23 (FLQI…CSVV), 37 to 57 (LVLA…GWFI), 72 to 88 (HWIA…KMIW), 111 to 131 (IILG…LAFV), 138 to 158 (VALS…WIGH), and 164 to 184 (FGKW…ANIV).

This sequence belongs to the MntP (TC 9.B.29) family.

The protein resides in the cell membrane. In terms of biological role, probably functions as a manganese efflux pump. The polypeptide is Putative manganese efflux pump MntP (Corynebacterium glutamicum (strain ATCC 13032 / DSM 20300 / JCM 1318 / BCRC 11384 / CCUG 27702 / LMG 3730 / NBRC 12168 / NCIMB 10025 / NRRL B-2784 / 534)).